The chain runs to 59 residues: Large ribosomal subunit protein uL30 (59 aa).

This sequence belongs to the universal ribosomal protein uL30 family. Part of the 50S ribosomal subunit.

This Proteus mirabilis (strain HI4320) protein is Large ribosomal subunit protein uL30.